The sequence spans 523 residues: 3-hydroxybenzoate--CoA ligase (523 aa).

It belongs to the ATP-dependent AMP-binding enzyme family. Benzoate-CoA ligase subfamily.

The catalysed reaction is 3-hydroxybenzoate + ATP + CoA = 3-hydroxybenzoyl-CoA + AMP + diphosphate. It catalyses the reaction 4-hydroxybenzoate + ATP + CoA = 4-hydroxybenzoyl-CoA + AMP + diphosphate. Functionally, ligase involved in the anaerobic degradation of 3-hydroxybenzoate (3OHBz). Catalyzes the activation of 3-hydroxybenzoate to 3-hydroxybenzoyl-CoA. Also shows high activity with protocatechuate and 4-hydroxybenzoate. Exhibits lower activity with benzoate, but cannot use 2-hydroxybenzoate or benzoate analogs containing other substituents at the ortho position, such as 2-aminobenzoate (anthranilate). This Aromatoleum sp. (strain CIB) (Azoarcus sp. (strain CIB)) protein is 3-hydroxybenzoate--CoA ligase.